We begin with the raw amino-acid sequence, 285 residues long: Ribose-phosphate pyrophosphokinase (285 aa).

Residues 34-36 (DGE) and 91-92 (RQ) each bind ATP. Mg(2+)-binding residues include His124 and Asp162. Residue Lys185 is part of the active site. D-ribose 5-phosphate is bound by residues Arg187, Asp211, and 215-219 (STGGT).

This sequence belongs to the ribose-phosphate pyrophosphokinase family. Class III (archaeal) subfamily. Mg(2+) serves as cofactor.

The protein localises to the cytoplasm. It catalyses the reaction D-ribose 5-phosphate + ATP = 5-phospho-alpha-D-ribose 1-diphosphate + AMP + H(+). The protein operates within metabolic intermediate biosynthesis; 5-phospho-alpha-D-ribose 1-diphosphate biosynthesis; 5-phospho-alpha-D-ribose 1-diphosphate from D-ribose 5-phosphate (route I): step 1/1. In terms of biological role, involved in the biosynthesis of the central metabolite phospho-alpha-D-ribosyl-1-pyrophosphate (PRPP) via the transfer of pyrophosphoryl group from ATP to 1-hydroxyl of ribose-5-phosphate (Rib-5-P). This Pyrococcus abyssi (strain GE5 / Orsay) protein is Ribose-phosphate pyrophosphokinase.